The following is a 302-amino-acid chain: uncharacterized protein (302 aa).

The next 9 helical transmembrane spans lie at 3–23 (ILGV…SDWF), 39–59 (FVIG…LTSA), 77–97 (SCIC…PIIV), 106–126 (LVYL…FSWI), 128–148 (GVVL…NGSA), 163–183 (FSLV…ELFV), 199–219 (VIGF…VSLA), 227–247 (GMVL…ALAV), and 254–274 (LPAE…LYLF).

Belongs to the Ca(2+):cation antiporter (CaCA) (TC 2.A.19) family.

It localises to the cell membrane. This is an uncharacterized protein from Methanocaldococcus jannaschii (strain ATCC 43067 / DSM 2661 / JAL-1 / JCM 10045 / NBRC 100440) (Methanococcus jannaschii).